A 159-amino-acid polypeptide reads, in one-letter code: Putative pre-16S rRNA nuclease (159 aa).

Belongs to the YqgF nuclease family.

The protein localises to the cytoplasm. Its function is as follows. Could be a nuclease involved in processing of the 5'-end of pre-16S rRNA. This Bartonella henselae (strain ATCC 49882 / DSM 28221 / CCUG 30454 / Houston 1) (Rochalimaea henselae) protein is Putative pre-16S rRNA nuclease.